The following is a 510-amino-acid chain: ETS translocation variant 5 (510 aa).

A disordered region spans residues 131 to 208 (FKPLTPPTTP…QPLQMPKMMP (78 aa)). A compositionally biased stretch (low complexity) spans 161–174 (GHAPAAGPVQGVGP). A compositionally biased stretch (pro residues) spans 175–185 (APAPHSLPEPG). At Ser248 the chain carries Phosphoserine. Residue Lys350 forms a Glycyl lysine isopeptide (Lys-Gly) (interchain with G-Cter in SUMO2) linkage. Residues 368 to 448 (LQLWQFLVTL…AGERYVYKFV (81 aa)) constitute a DNA-binding region (ETS).

As to quaternary structure, interacts (via C-terminal) with ZMYM5 (via N-terminal 120 amino acid region). As to expression, ubiquitous.

The protein localises to the nucleus. Functionally, binds to DNA sequences containing the consensus nucleotide core sequence 5'-GGAA.-3'. The protein is ETS translocation variant 5 (ETV5) of Homo sapiens (Human).